The sequence spans 389 residues: Chalcone synthase (389 aa).

Residue Cys-164 is part of the active site.

This sequence belongs to the thiolase-like superfamily. Chalcone/stilbene synthases family.

The catalysed reaction is (E)-4-coumaroyl-CoA + 3 malonyl-CoA + 3 H(+) = 2',4,4',6'-tetrahydroxychalcone + 3 CO2 + 4 CoA. It functions in the pathway secondary metabolite biosynthesis; flavonoid biosynthesis. Functionally, the primary product of this enzyme is 4,2',4',6'-tetrahydroxychalcone (also termed naringenin-chalcone or chalcone) which can under specific conditions spontaneously isomerize into naringenin. This chain is Chalcone synthase (CHS), found in Catharanthus roseus (Madagascar periwinkle).